A 283-amino-acid chain; its full sequence is F-box only protein 27 (283 aa).

The interval 1 to 23 (MGASVSRGRAARVPAPEPEPEEA) is disordered. Residues 23–70 (ALDLSQLPPELLLVVLSHVPPRTLLGRCRQVCRGWRALVDGQALWLLI) enclose the F-box domain. The region spanning 104–280 (FCARRPIGRN…VTNSSVIVRV (177 aa)) is the FBA domain.

In terms of assembly, part of a SCF (SKP1-cullin-F-box) protein ligase complex. Interacts with SKP1 and CUL1. In terms of tissue distribution, predominantly expressed in brain, heart and kidney. Expressed at lower levels in liver and lung.

Its function is as follows. Substrate-recognition component of the SCF (SKP1-CUL1-F-box protein)-type E3 ubiquitin ligase complex. Able to recognize and bind denatured glycoproteins, which are modified with complex-type oligosaccharides. The polypeptide is F-box only protein 27 (FBXO27) (Homo sapiens (Human)).